A 600-amino-acid polypeptide reads, in one-letter code: Integrator complex subunit 11 (600 aa).

Zn(2+) is bound by residues His68, His70, Asp72, His73, His157, and Asp178. The short motif at 68–73 (HFHLDH) is the HXHXDH motif element. Residue Glu203 is part of the active site. Residue Lys381 forms a Glycyl lysine isopeptide (Lys-Gly) (interchain with G-Cter in SUMO) linkage. His414 provides a ligand contact to Zn(2+). Residues Lys462 and Lys475 each participate in a glycyl lysine isopeptide (Lys-Gly) (interchain with G-Cter in SUMO) cross-link. The short motif at 469 to 479 (LLPEAKKPRLL) is the Nuclear localization signal element.

Belongs to the metallo-beta-lactamase superfamily. RNA-metabolizing metallo-beta-lactamase-like family. INTS11 subfamily. In terms of assembly, component of the Integrator complex, composed of core subunits INTS1, INTS2, INTS3, INTS4, INTS5, INTS6, INTS7, INTS8, INTS9/RC74, INTS10, INTS11/CPSF3L, INTS12, INTS13, INTS14 and INTS15. The core complex associates with protein phosphatase 2A subunits PPP2CA and PPP2R1A, to form the Integrator-PP2A (INTAC) complex. INTS11 is part of the RNA endonuclease subcomplex, composed of INTS4, INTS9, INTS11 and inositol hexakisphosphate (InsP6). Interacts with WDR73; interaction is required for the assembly of the RNA endonuclease subcomplex in the cytoplasm. Interacts with BRAT1; interaction is required for the assembly of the RNA endonuclease subcomplex and inhibits the endonuclease activity of INTS11 before formation of mature integrator complex. Requires Zn(2+) as cofactor. Sumoylated; sumoylation regulates its subcellular location and is required for integrator complex integrity.

It is found in the nucleus. The protein localises to the cytoplasm. The RNA endonuclease activity is inhibited by BRAT1 that forms hyrogen bond and hydrophobic interactions with the active site. Its function is as follows. RNA endonuclease component of the integrator complex, a multiprotein complex that terminates RNA polymerase II (Pol II) transcription in the promoter-proximal region of genes. The integrator complex provides a quality checkpoint during transcription elongation by driving premature transcription termination of transcripts that are unfavorably configured for transcriptional elongation: the complex terminates transcription by (1) catalyzing dephosphorylation of the C-terminal domain (CTD) of Pol II subunit POLR2A/RPB1 and SUPT5H/SPT5, (2) degrading the exiting nascent RNA transcript via endonuclease activity and (3) promoting the release of Pol II from bound DNA. The integrator complex is also involved in terminating the synthesis of non-coding Pol II transcripts, such as enhancer RNAs (eRNAs), small nuclear RNAs (snRNAs), telomerase RNAs and long non-coding RNAs (lncRNAs). Within the integrator complex, INTS11 constitutes the RNA endonuclease subunit that degrades exiting nascent RNA transcripts. Mediates recruitment of cytoplasmic dynein to the nuclear envelope, probably as component of the integrator complex. This chain is Integrator complex subunit 11 (INTS11), found in Pongo abelii (Sumatran orangutan).